Reading from the N-terminus, the 541-residue chain is CTP synthase (541 aa).

An amidoligase domain region spans residues 1–265 (MTRFIFITGG…DAVVCRHFGL (265 aa)). Ser13 lines the CTP pocket. Ser13 is a binding site for UTP. Residue 14–19 (SLGKGL) coordinates ATP. Tyr54 contributes to the L-glutamine binding site. Asp71 provides a ligand contact to ATP. Mg(2+) is bound by residues Asp71 and Glu139. Residues 146-148 (DIE), 186-191 (KTKPTQ), and Lys222 contribute to the CTP site. Residues 186–191 (KTKPTQ) and Lys222 contribute to the UTP site. Residues 290–540 (TIAIVGKYIS…IAAAVRQSRL (251 aa)) enclose the Glutamine amidotransferase type-1 domain. Gly352 is a binding site for L-glutamine. Cys379 acts as the Nucleophile; for glutamine hydrolysis in catalysis. Residues 380–383 (FGMQ), Glu403, and Arg468 each bind L-glutamine. Catalysis depends on residues His513 and Glu515.

Belongs to the CTP synthase family. Homotetramer.

The enzyme catalyses UTP + L-glutamine + ATP + H2O = CTP + L-glutamate + ADP + phosphate + 2 H(+). It catalyses the reaction L-glutamine + H2O = L-glutamate + NH4(+). The catalysed reaction is UTP + NH4(+) + ATP = CTP + ADP + phosphate + 2 H(+). It participates in pyrimidine metabolism; CTP biosynthesis via de novo pathway; CTP from UDP: step 2/2. Allosterically activated by GTP, when glutamine is the substrate; GTP has no effect on the reaction when ammonia is the substrate. The allosteric effector GTP functions by stabilizing the protein conformation that binds the tetrahedral intermediate(s) formed during glutamine hydrolysis. Inhibited by the product CTP, via allosteric rather than competitive inhibition. Catalyzes the ATP-dependent amination of UTP to CTP with either L-glutamine or ammonia as the source of nitrogen. Regulates intracellular CTP levels through interactions with the four ribonucleotide triphosphates. This is CTP synthase from Paramagnetospirillum magneticum (strain ATCC 700264 / AMB-1) (Magnetospirillum magneticum).